We begin with the raw amino-acid sequence, 382 residues long: Dual-specificity RNA methyltransferase RlmN (382 aa).

Residue Glu91 is the Proton acceptor of the active site. One can recognise a Radical SAM core domain in the interval 97–339 (EEDRGTLCIS…TTIRKTRGDD (243 aa)). Residues Cys104 and Cys344 are joined by a disulfide bond. 3 residues coordinate [4Fe-4S] cluster: Cys111, Cys115, and Cys118. Residues 165–166 (GE), Ser197, 219–221 (SLH), and Asn301 contribute to the S-adenosyl-L-methionine site. Cys344 serves as the catalytic S-methylcysteine intermediate.

The protein belongs to the radical SAM superfamily. RlmN family. [4Fe-4S] cluster serves as cofactor.

It localises to the cytoplasm. It carries out the reaction adenosine(2503) in 23S rRNA + 2 reduced [2Fe-2S]-[ferredoxin] + 2 S-adenosyl-L-methionine = 2-methyladenosine(2503) in 23S rRNA + 5'-deoxyadenosine + L-methionine + 2 oxidized [2Fe-2S]-[ferredoxin] + S-adenosyl-L-homocysteine. The catalysed reaction is adenosine(37) in tRNA + 2 reduced [2Fe-2S]-[ferredoxin] + 2 S-adenosyl-L-methionine = 2-methyladenosine(37) in tRNA + 5'-deoxyadenosine + L-methionine + 2 oxidized [2Fe-2S]-[ferredoxin] + S-adenosyl-L-homocysteine. Its function is as follows. Specifically methylates position 2 of adenine 2503 in 23S rRNA and position 2 of adenine 37 in tRNAs. m2A2503 modification seems to play a crucial role in the proofreading step occurring at the peptidyl transferase center and thus would serve to optimize ribosomal fidelity. The sequence is that of Dual-specificity RNA methyltransferase RlmN from Albidiferax ferrireducens (strain ATCC BAA-621 / DSM 15236 / T118) (Rhodoferax ferrireducens).